Reading from the N-terminus, the 471-residue chain is ATP synthase subunit beta (471 aa).

157–164 (GGAGVGKT) is an ATP binding site.

Belongs to the ATPase alpha/beta chains family. F-type ATPases have 2 components, CF(1) - the catalytic core - and CF(0) - the membrane proton channel. CF(1) has five subunits: alpha(3), beta(3), gamma(1), delta(1), epsilon(1). CF(0) has three main subunits: a(1), b(2) and c(9-12). The alpha and beta chains form an alternating ring which encloses part of the gamma chain. CF(1) is attached to CF(0) by a central stalk formed by the gamma and epsilon chains, while a peripheral stalk is formed by the delta and b chains.

The protein resides in the cell inner membrane. It carries out the reaction ATP + H2O + 4 H(+)(in) = ADP + phosphate + 5 H(+)(out). Functionally, produces ATP from ADP in the presence of a proton gradient across the membrane. The catalytic sites are hosted primarily by the beta subunits. The sequence is that of ATP synthase subunit beta from Trichlorobacter lovleyi (strain ATCC BAA-1151 / DSM 17278 / SZ) (Geobacter lovleyi).